Consider the following 327-residue polypeptide: MEEIEESPPTSEELVPCKICGRSFFPKVLKKHVPICQKTAAKRRKVFDSGRQRAEGTEISTVKPIKPKLQSSSSSSKSDKPEPPKKQSNWRRKHEEFIATIRAAKSINQVIKDGGPLPPPPPPSYDPDYIQCPYCQRRFGENAADRHIKFCKEQASRISNKSKLAGGDKTKPPARTQYKPPAPKKANSPTASSVSSRLPQRSAYGQGAGTGIPSSKPSSTGSIKSTPSGYSPLRNNSSSLTSPPSEGNMKPKGMVSQSSLRNPSTGIGMNKKKIQNADNCISRNDMKNENDFNYSTTGTKFCHECGTKYPVESAKFCCECGVKRMYI.

The segment at 13 to 42 adopts a C2HC/C3H-type 1 zinc-finger fold; that stretch reads ELVPCKICGRSFFPKVLKKHVPICQKTAAK. Cys17, Cys20, His32, and Cys36 together coordinate Zn(2+). Disordered regions lie at residues 40 to 96 and 108 to 131; these read AAKR…KHEE and NQVIKDGGPLPPPPPPSYDPDYIQ. Residues 46 to 56 show a composition bias toward basic and acidic residues; it reads VFDSGRQRAEG. Positions 63–76 are enriched in low complexity; the sequence is KPIKPKLQSSSSSS. Residues 116–125 show a composition bias toward pro residues; that stretch reads PLPPPPPPSY. The segment at 128–157 adopts a C2HC/C3H-type 2 zinc-finger fold; sequence DYIQCPYCQRRFGENAADRHIKFCKEQASR. Cys132, Cys135, His147, and Cys151 together coordinate Zn(2+). The segment at 154–271 is disordered; the sequence is QASRISNKSK…NPSTGIGMNK (118 aa). Positions 187 to 199 are enriched in polar residues; it reads NSPTASSVSSRLP. Residues 211 to 229 are compositionally biased toward low complexity; the sequence is GIPSSKPSSTGSIKSTPSG. Polar residues-rich tracts occupy residues 233–245 and 255–267; these read LRNNSSSLTSPPS and VSQSSLRNPSTGI.

Belongs to the ZC2HC1 family. Zn(2+) serves as cofactor.

This is Zinc finger C2HC domain-containing protein 1A (zc2hc1a) from Danio rerio (Zebrafish).